Reading from the N-terminus, the 130-residue chain is uncharacterized protein (130 aa).

This is an uncharacterized protein from Aedes vexans (Inland floodwater mosquito).